The sequence spans 831 residues: MutS protein homolog 5 (831 aa).

Residues 1-43 (MAFRATPGRTPPGPGPGVPSASFSSPQPAMAAPGGIEEEDEEE) form a disordered region. 589-596 (GPNSSGKS) is a binding site for ATP.

This sequence belongs to the DNA mismatch repair MutS family. In terms of assembly, heterooligomer of MSH4 and MSH5. Interacts with HJURP. Interacts with C7h12orf40/REDIC1.

Involved in DNA mismatch repair and meiotic recombination processes. Facilitates crossovers between homologs during meiosis. The sequence is that of MutS protein homolog 5 (Msh5) from Rattus norvegicus (Rat).